Consider the following 759-residue polypeptide: Serine/threonine-protein kinase HRK1 (759 aa).

A disordered region spans residues 1-32 (MPNLLSRNPFHGHHNDHHHDRENSSNNPPQLI). Residue Ser37 is modified to Phosphoserine. Residues 45-162 (KQSNDSLRSE…PPPSKSTSTV (118 aa)) are disordered. The segment covering 59–97 (SMKSTTTTTNYTTTNLNNNTHSHSNATSISTNNYNNNYE) has biased composition (low complexity). Polar residues predominate over residues 113–122 (SPASPKQTHS). One can recognise a Protein kinase domain in the interval 215-722 (GKLGKLLGSG…LDDIFNDEWF (508 aa)). Residues 221–229 (LGSGAGGSV) and Lys244 each bind ATP. Asp340 acts as the Proton acceptor in catalysis. A phosphoserine mark is found at Ser382 and Ser472. Polar residues predominate over residues 493 to 502 (PNTPASIQGK). Disordered regions lie at residues 493-578 (PNTP…GRVD) and 614-682 (AANA…KIIH). Thr495 carries the post-translational modification Phosphothreonine. Ser498 is modified (phosphoserine). Over residues 510 to 519 (VEEETEENKE) the composition is skewed to acidic residues. The span at 520–547 (DDSNNDKESTPDNDKESTIDIKISKNEN) shows a compositional bias: basic and acidic residues. Low complexity predominate over residues 614-646 (AANANPDMVPQNNPQQQQQQQQQQQQQQQQQQQ). The segment covering 663–672 (ASDNKSSQQH) has biased composition (polar residues).

The protein belongs to the protein kinase superfamily. Ser/Thr protein kinase family.

It is found in the cytoplasm. It catalyses the reaction L-seryl-[protein] + ATP = O-phospho-L-seryl-[protein] + ADP + H(+). The enzyme catalyses L-threonyl-[protein] + ATP = O-phospho-L-threonyl-[protein] + ADP + H(+). Its function is as follows. Involved in regulating the activity of the plasma membrane proton pump PMA1. The protein is Serine/threonine-protein kinase HRK1 (HRK1) of Saccharomyces cerevisiae (strain ATCC 204508 / S288c) (Baker's yeast).